The sequence spans 331 residues: Hydroxysteroid dehydrogenase-like protein 1 (331 aa).

Residues 2-82 (AAVDRFNLLY…TGSTDGIGKA (81 aa)) are required for mitochondria translocation. Residues 74–80 (GSTDGIG) and D125 each bind NADP(+). Residue S205 coordinates substrate. Y218 (proton acceptor) is an active-site residue. K222 contacts NADP(+).

Belongs to the short-chain dehydrogenases/reductases (SDR) family. 17-beta-HSD 3 subfamily.

It localises to the mitochondrion. Its function is as follows. May catalyze the metabolism of steroid hormones and thus play an important role in sex differentiation, the emergence and maintenance of the secondary sexual characters, and the regulation of endocrine. This is Hydroxysteroid dehydrogenase-like protein 1 (HSDL1) from Gallus gallus (Chicken).